Reading from the N-terminus, the 300-residue chain is Ribosomal protein bS6--L-glutamate ligase (300 aa).

The region spanning 104–287 is the ATP-grasp domain; that stretch reads MQLLARQGID…IAGKMIRWIE (184 aa). ATP contacts are provided by residues K141, 178–179, D187, and 211–213; these read EY and RSN. Mg(2+) is bound by residues D248, E260, and N262. D248, E260, and N262 together coordinate Mn(2+).

Belongs to the RimK family. The cofactor is Mg(2+). Requires Mn(2+) as cofactor.

Functionally, an L-glutamate ligase that catalyzes the ATP-dependent post-translational addition of glutamate residues to the C-terminus of ribosomal protein bS6 (RpsF). Is also able to catalyze the synthesis of poly-alpha-glutamate in vitro, via ATP hydrolysis from unprotected glutamate as substrate. The number of glutamate residues added to either RpsF or to poly-alpha-glutamate changes with pH. The sequence is that of Ribosomal protein bS6--L-glutamate ligase from Shigella flexneri serotype 5b (strain 8401).